We begin with the raw amino-acid sequence, 599 residues long: Elongation factor 4 (599 aa).

Residues 2–184 (KNIRNFSIIA…RLVRDIPPPQ (183 aa)) enclose the tr-type G domain. GTP-binding positions include 14–19 (DHGKST) and 131–134 (NKID).

The protein belongs to the TRAFAC class translation factor GTPase superfamily. Classic translation factor GTPase family. LepA subfamily.

It is found in the cell inner membrane. It carries out the reaction GTP + H2O = GDP + phosphate + H(+). Functionally, required for accurate and efficient protein synthesis under certain stress conditions. May act as a fidelity factor of the translation reaction, by catalyzing a one-codon backward translocation of tRNAs on improperly translocated ribosomes. Back-translocation proceeds from a post-translocation (POST) complex to a pre-translocation (PRE) complex, thus giving elongation factor G a second chance to translocate the tRNAs correctly. Binds to ribosomes in a GTP-dependent manner. This chain is Elongation factor 4, found in Salmonella paratyphi A (strain ATCC 9150 / SARB42).